The primary structure comprises 118 residues: MICOS complex subunit MIC13 (118 aa).

Over 1–7 (MVARVWS) the chain is Mitochondrial matrix. A helical transmembrane segment spans residues 8–26 (LMRFLIKGSVAGGAVYLVY). Residues 27–118 (DQELLGPSDK…GWEYVKARTK (92 aa)) lie on the Mitochondrial intermembrane side of the membrane.

The protein belongs to the MICOS complex subunit Mic13 family. As to quaternary structure, component of the mitochondrial contact site and cristae organizing system (MICOS) complex, composed of at least MICOS10/MIC10, CHCHD3/MIC19, CHCHD6/MIC25, APOO/MIC26, MICOS13/MIC13, APOOL/MIC27 and IMMT/MIC60. The MICOS complex associates with mitochondrial outer membrane proteins SAMM50, MTX1 and MTX2 (together described as components of the mitochondrial outer membrane sorting assembly machinery (SAM) complex) and DNAJC11, mitochondrial inner membrane protein TMEM11 and with HSPA9. The MICOS and SAM complexes together with DNAJC11 are part of a large protein complex spanning both membranes termed the mitochondrial intermembrane space bridging (MIB) complex.

The protein localises to the mitochondrion inner membrane. Component of the MICOS complex, a large protein complex of the mitochondrial inner membrane that plays crucial roles in the maintenance of crista junctions, inner membrane architecture, and formation of contact sites to the outer membrane. Constituent of mature MICOS complex, it is required for the formation of cristae junction (CJ) and maintenance of cristae morphology. Required for the incorporation of MICOS10/MIC10 into the MICOS complex. The polypeptide is MICOS complex subunit MIC13 (Homo sapiens (Human)).